The primary structure comprises 400 residues: MAMNFVTFNQDYSYLAVGNIAILEMLFSTSLVALILSPRRLQITNTKRQSTICELTFPTTVLAVRLNRKRLVIVLEDQIYLYDIQTMKLLYTIETSPNPNAICALSPSSENCYLAYPLPQKAPPSSFTPPSHAPPSSAHISPTSGEVLIFDTLKLEAINVVEAHKSPLSCLAINTEGTLLATASDKGTIIRVFSVPDAQKLYQFRRGSMPSRIFSMSFNITSTLLCVSSATETIHIFKLGHQDPSEDLPTSPIGTDSRKTNSTPRERAFSQGSSTLSGGDNSPTDGDPSDISSRKHNGTLMGMIRRTSQNVGNSFAATVGGYLPKGVTEIWEPARDFAWIRLPKTAGYGGPGSNAGPVRSVVAMSSNTPQVMVVTSDGNFYVYNVDLSKGGEGTLTKQYS.

2 WD repeats span residues 163–203 and 208–247; these read AHKS…KLYQ and SMPS…PSED. The L/FRRG motif motif lies at 204-208; the sequence is FRRGS. A disordered region spans residues 241–296; the sequence is HQDPSEDLPTSPIGTDSRKTNSTPRERAFSQGSSTLSGGDNSPTDGDPSDISSRKH. Positions 256-268 are enriched in basic and acidic residues; it reads DSRKTNSTPRERA. Over residues 270–284 the composition is skewed to polar residues; it reads SQGSSTLSGGDNSPT. WD repeat units follow at residues 295–341 and 353–393; these read KHNG…AWIR and SNAG…GGEG.

Belongs to the WD repeat PROPPIN family. In terms of assembly, component of the PI(3,5)P2 regulatory complex.

Its subcellular location is the preautophagosomal structure membrane. The protein localises to the vacuole membrane. It is found in the endosome membrane. Functionally, the PI(3,5)P2 regulatory complex regulates both the synthesis and turnover of phosphatidylinositol 3,5-bisphosphate (PtdIns(3,5)P2). Necessary for proper vacuole morphology. Plays an important role in osmotically-induced vacuole fragmentation. Required for cytoplasm to vacuole transport (Cvt) vesicle formation, pexophagy and starvation-induced autophagy. Involved in correct ATG9 trafficking to the pre-autophagosomal structure. Might also be involved in premeiotic DNA replication. This chain is Autophagy-related protein 18 (ATG18), found in Ajellomyces capsulatus (strain NAm1 / WU24) (Darling's disease fungus).